The chain runs to 260 residues: Spectinomycin 9-adenylyltransferase (260 aa).

It catalyses the reaction spectinomycin + ATP = 9-O-adenylylspectinomycin + diphosphate. Mediates bacterial resistance to the antibiotic spectinomycin but not streptomycin. The sequence is that of Spectinomycin 9-adenylyltransferase (ant1) from Staphylococcus aureus (strain Mu50 / ATCC 700699).